We begin with the raw amino-acid sequence, 709 residues long: Methylmalonyl-CoA mutase (709 aa).

Substrate is bound by residues 73-77 (TIRQY), 183-185 (TIQ), R195, K222, H232, and 271-273 (RLS). One can recognise a B12-binding domain in the interval 579–709 (RPRMLVVKMG…ILDLIREARS (131 aa)). H592 is an adenosylcob(III)alamin binding site.

The protein belongs to the methylmalonyl-CoA mutase family. In terms of assembly, homodimer. The cofactor is adenosylcob(III)alamin.

It catalyses the reaction (R)-methylmalonyl-CoA = succinyl-CoA. The protein operates within metabolic intermediate metabolism; propanoyl-CoA degradation; succinyl-CoA from propanoyl-CoA: step 3/3. Its function is as follows. Radical enzyme that catalyzes the transformation of (2R)-methylmalonyl-CoA to succinyl-CoA. Is involved in the ethylmalonyl-CoA pathway for acetyl-CoA assimilation required for R.sphaeroides growth on acetate as sole carbon source. This is Methylmalonyl-CoA mutase from Cereibacter sphaeroides (strain ATCC 17023 / DSM 158 / JCM 6121 / CCUG 31486 / LMG 2827 / NBRC 12203 / NCIMB 8253 / ATH 2.4.1.) (Rhodobacter sphaeroides).